We begin with the raw amino-acid sequence, 283 residues long: Shikimate dehydrogenase (NADP(+)) (283 aa).

Residues 19–21 and T66 contribute to the shikimate site; that span reads SFS. K70 serves as the catalytic Proton acceptor. E82 lines the NADP(+) pocket. Shikimate is bound by residues N91 and D106. Residues 129–133 and I225 contribute to the NADP(+) site; that span reads GAGGA. Y227 is a shikimate binding site. G248 serves as a coordination point for NADP(+).

It belongs to the shikimate dehydrogenase family. As to quaternary structure, homodimer.

The enzyme catalyses shikimate + NADP(+) = 3-dehydroshikimate + NADPH + H(+). It functions in the pathway metabolic intermediate biosynthesis; chorismate biosynthesis; chorismate from D-erythrose 4-phosphate and phosphoenolpyruvate: step 4/7. In terms of biological role, involved in the biosynthesis of the chorismate, which leads to the biosynthesis of aromatic amino acids. Catalyzes the reversible NADPH linked reduction of 3-dehydroshikimate (DHSA) to yield shikimate (SA). The chain is Shikimate dehydrogenase (NADP(+)) from Methanosphaera stadtmanae (strain ATCC 43021 / DSM 3091 / JCM 11832 / MCB-3).